Consider the following 229-residue polypeptide: Coiled-coil domain-containing protein 134 (229 aa).

The first 22 residues, 1–22 (MDLLQFLAFLFVLLLSGMGATG), serve as a signal peptide directing secretion. Residue asparagine 148 is a short sequence motif, prevents secretion from ER. Asparagine 148 carries N-linked (GlcNAc...) asparagine glycosylation. Positions 193 to 229 (TDPFQKALREEEKRRKKEEKRKEIRKGPRISRSQSEL) are disordered. Positions 196-218 (FQKALREEEKRRKKEEKRKEIRK) form a coiled coil. A Nuclear localization signal motif is present at residues 206–213 (RRKKEEKR).

This sequence belongs to the CCDC134 family. In terms of assembly, interacts with TADA2A. Associates with the PCAF complex via TADA2A binding. Post-translationally, O-glycosylated, with additional sialic acid modifications. As to expression, expressed in cervical gland, cervical squamous epithelium, endometrium, stomach, kidney distal convoluted tubule, spermatogenic cells in testis, mammary gland, liver and striated muscle (at protein level). Also detected in placenta. Highest expression in testis relative to other tissues. Detected in T cells and dendritic cells; highly expressed in activated CD8(+) T cells, and also expressed at lower levels in CD4(+) T cells.

The protein localises to the endoplasmic reticulum lumen. It is found in the secreted. Its subcellular location is the cytoplasm. The protein resides in the nucleus. Functionally, molecular adapter required to prevent protein hyperglycosylation of HSP90B1: during translation, associates with nascent HSP90B1 and the STT3A catalytic component of the OST-A complex and tethers them to a specialized translocon that forms a microenvironment for HSP90B1 folding. In the CCDC134-containing translocon, STT3A associates with the SRT pseudosubstrate motif of HSP90B1, preventing access to facultative glycosylation sites until folding is completed, preventing hyperglycosylation and subsequent degradation of HSP90B1. In extracellular secreted form, promotes proliferation and activation of CD8(+) T-cells, suggesting a cytokine-like function. May inhibit ERK and JNK signaling activity. May suppress cell migration and invasion activity, via its effects on ERK and JNK signaling. May also localize in the nucleus: enhances stability of the PCAF histone acetyltransferase (HAT) complex member TADA2A and thus promotes PCAF-mediated histone acetyltransferase activity. Has a critical role in the regulation of osteogenesis and bone development. The protein is Coiled-coil domain-containing protein 134 of Homo sapiens (Human).